The following is a 98-amino-acid chain: Citrate lyase acyl carrier protein (98 aa).

Residue S14 is modified to O-(phosphoribosyl dephospho-coenzyme A)serine.

It belongs to the CitD family. In terms of assembly, oligomer with a subunit composition of (alpha,beta,gamma)6.

The protein localises to the cytoplasm. Covalent carrier of the coenzyme of citrate lyase. The polypeptide is Citrate lyase acyl carrier protein (Salmonella arizonae (strain ATCC BAA-731 / CDC346-86 / RSK2980)).